Consider the following 429-residue polypeptide: 3-phosphoshikimate 1-carboxyvinyltransferase (429 aa).

Positions 23, 24, and 28 each coordinate 3-phosphoshikimate. Residue K23 coordinates phosphoenolpyruvate. Residues G95 and R123 each contribute to the phosphoenolpyruvate site. Positions 168, 170, 316, and 343 each coordinate 3-phosphoshikimate. Phosphoenolpyruvate is bound at residue Q170. The active-site Proton acceptor is the D316. 2 residues coordinate phosphoenolpyruvate: R347 and R389.

The protein belongs to the EPSP synthase family. Monomer.

It is found in the cytoplasm. It catalyses the reaction 3-phosphoshikimate + phosphoenolpyruvate = 5-O-(1-carboxyvinyl)-3-phosphoshikimate + phosphate. Its pathway is metabolic intermediate biosynthesis; chorismate biosynthesis; chorismate from D-erythrose 4-phosphate and phosphoenolpyruvate: step 6/7. In terms of biological role, catalyzes the transfer of the enolpyruvyl moiety of phosphoenolpyruvate (PEP) to the 5-hydroxyl of shikimate-3-phosphate (S3P) to produce enolpyruvyl shikimate-3-phosphate and inorganic phosphate. The chain is 3-phosphoshikimate 1-carboxyvinyltransferase from Bacillus cereus (strain G9842).